The chain runs to 506 residues: MNTMTLTPGQLSLSQLYDVWRHPVQLRLDANAIDGINASVACVNDIVAEGRTAYGINTGFGLLAQTRIADEDLQNLQRSLVLSHAAGVGDPLDDAMVRLIMVLKINSLARGFSGIRLSVIEALIALVNAGVYPLILAKGSVGASGDLAPLAHLSLTLLGEGKARWQGEWLPAQTALKKAGLEPVALAAKEGLALLNGTQASTAFALRGLFEAQELFASAVVCGALTTEAVLGSRRPFDARIHAARGQQGQIDVARLFRHLLTDTSAIAESHHHCHKVQDPYSLRCQPQVMGACLTQLRQTKEVLLAEANAVSDNPLVFADAGEVISGGNFHAEPVAMAADNLALAIAEIGALSERRIALMMDKHMSQLPPFLVKNGGVNSGFMIAQVTAAALASENKALAHPHSVDSLPTSANQEDHVSMAPAAGRRLWEMAANTRGIIAVEWLAACQGIDLREGLTSSPLLEQARQTLREQVAHYTQDRFFAPDIECATALLAQGALQRLVPDFM.

The 5-imidazolinone (Ala-Gly) cross-link spans 143–145 (ASG). S144 is modified (2,3-didehydroalanine (Ser)).

Belongs to the PAL/histidase family. Post-translationally, contains an active site 4-methylidene-imidazol-5-one (MIO), which is formed autocatalytically by cyclization and dehydration of residues Ala-Ser-Gly.

Its subcellular location is the cytoplasm. It carries out the reaction L-histidine = trans-urocanate + NH4(+). It functions in the pathway amino-acid degradation; L-histidine degradation into L-glutamate; N-formimidoyl-L-glutamate from L-histidine: step 1/3. The protein is Histidine ammonia-lyase of Salmonella agona (strain SL483).